A 295-amino-acid polypeptide reads, in one-letter code: Mitochondrial dicarboxylate transporter (295 aa).

Solcar repeat units lie at residues 4-88 (KQVK…LKEH), 96-188 (TNMW…FKNF), and 198-286 (KKNS…LKKY). 6 consecutive transmembrane segments (helical) span residues 8–24 (YPWWYGGAAGIFAVMNT), 63–82 (GLSASLLRQCTYTTARFGMY), 98–122 (MWYLLGASMVSGALGGLAGNFADLI), 163–182 (GWKPNMVRGVLMTASQVVTY), 204–224 (LTSSLLAGFVATTVCSPADVI), and 262–280 (WVPSFTRLAPFTMLIFFAM).

This sequence belongs to the mitochondrial carrier (TC 2.A.29) family. Homodimer.

It is found in the mitochondrion inner membrane. Mitochondrial dicarboxylic transporter catalyzing the exchange of dicarboxylic acids like malate and succinate for inorganic phosphate. Required for growth on ethanol and acetate. This chain is Mitochondrial dicarboxylate transporter (DIC1), found in Candida glabrata (strain ATCC 2001 / BCRC 20586 / JCM 3761 / NBRC 0622 / NRRL Y-65 / CBS 138) (Yeast).